The following is a 641-amino-acid chain: Forkhead box protein P4 (641 aa).

Disordered regions lie at residues 1–43 and 239–264; these read MMVE…NGEL and SFPT…RRES. Composition is skewed to polar residues over residues 8 to 27 and 239 to 259; these read IRST…QSDS and SFPT…NGQN. The segment at 278 to 303 adopts a C2H2-type zinc-finger fold; sequence GECRWPGCEALCEDMGQFIKHLNTEH. Residues 320 to 341 are leucine-zipper; that stretch reads VQQLEIQLAKESERLQAMMTHL. The segment at 354–358 is ctbp1-binding; the sequence is PLNLV. The segment at residues 436–526 is a DNA-binding region (fork-head); sequence RPPFTYASLI…PPKMTGSPTL (91 aa). The disordered stretch occupies residues 563-641; it reads SSGSVLHGGH…ESESPMEDLP (79 aa). Over residues 576–599 the composition is skewed to polar residues; it reads TSTGEPGNSNGSSPRLSPQYSQSI. Residues 600–611 show a composition bias toward basic and acidic residues; sequence HVKEEPAEDDVR. Positions 629 to 641 are enriched in acidic residues; sequence RDLESESPMEDLP.

Dimerization is required for DNA-binding. As to expression, first expressed in the anterior neural field of stage 15 embryos. At stage 18, localized in three domains of the brain (rostral forebrain, midbrain and hindbrain) and in the eye anlage. Cerebral and retinal expression persists at later stages with additional expression in the branchial arches, at the base of the hatching gland, and in the pancreas.

It is found in the nucleus. In terms of biological role, transcriptional repressor. The polypeptide is Forkhead box protein P4 (Xenopus laevis (African clawed frog)).